The sequence spans 475 residues: MSPQTETKTGAGFKAGVKDYRLTYYTPDYQVSETDILAAFRMTPQPGVPAEECGAAVAAESSTGTWTTVWTDGLTQLDRYKGRCYDLEPVPGESNQYIAYVAYPIDLFEEGSVTNLLTSIVGNVFGFKALRALRLEDLRIPPAYSKTFWGPPHGIQVERDRLNKYGRPLLGCTIKPKLGLSAKNYGRAVYECLRGGLDFTKDDENVNSQSFMRWRDRFLFCAEAIYKAQTETGEVKGHYLNATAGTCEEMYKRASFAAQIGVPIIMHDYLTGGFTANTSLAMYCRDNGLLLHIHRAMHAVIDRQRNHGIHFRVLAKTLRMSGGDHLHSGTVVGKLEGEREVTLGFVDLMRDAYVEKDRSRGIYFTQDWCGMGGTMPVASGGIHVWHMPALTEIFGDDACLQFGGGTLGHPWGNAPGAAANRVASEACVQARNEGRDLSREGGDVIREACKWSPELAAACEVWKEIKFEFETIDKL.

N123 and T173 together coordinate substrate. Residue K175 is the Proton acceptor of the active site. A substrate-binding site is contributed by K177. Mg(2+) contacts are provided by K201, D203, and E204. Position 201 is an N6-carboxylysine (K201). H294 (proton acceptor) is an active-site residue. R295, H327, and S379 together coordinate substrate.

The protein belongs to the RuBisCO large chain family. Type I subfamily. Heterohexadecamer of 8 large chains and 8 small chains; disulfide-linked. The disulfide link is formed within the large subunit homodimers. The cofactor is Mg(2+). Post-translationally, the disulfide bond which can form in the large chain dimeric partners within the hexadecamer appears to be associated with oxidative stress and protein turnover.

Its subcellular location is the plastid. The protein localises to the chloroplast. The catalysed reaction is 2 (2R)-3-phosphoglycerate + 2 H(+) = D-ribulose 1,5-bisphosphate + CO2 + H2O. The enzyme catalyses D-ribulose 1,5-bisphosphate + O2 = 2-phosphoglycolate + (2R)-3-phosphoglycerate + 2 H(+). Its function is as follows. RuBisCO catalyzes two reactions: the carboxylation of D-ribulose 1,5-bisphosphate, the primary event in carbon dioxide fixation, as well as the oxidative fragmentation of the pentose substrate in the photorespiration process. Both reactions occur simultaneously and in competition at the same active site. In Euglena gracilis, this protein is Ribulose bisphosphate carboxylase large chain.